Consider the following 217-residue polypeptide: High frequency lysogenization protein HflD homolog (217 aa).

Belongs to the HflD family.

It localises to the cytoplasm. The protein localises to the cell membrane. In Buchnera aphidicola subsp. Baizongia pistaciae (strain Bp), this protein is High frequency lysogenization protein HflD homolog.